A 145-amino-acid polypeptide reads, in one-letter code: uncharacterized protein (145 aa).

Residues 4-24 traverse the membrane as a helical segment; sequence IYMLVALLISSLVLFAGCVQN.

It localises to the membrane. This is an uncharacterized protein from Methanocaldococcus jannaschii (strain ATCC 43067 / DSM 2661 / JAL-1 / JCM 10045 / NBRC 100440) (Methanococcus jannaschii).